The primary structure comprises 313 residues: Ribosomal RNA small subunit methyltransferase H (313 aa).

S-adenosyl-L-methionine-binding positions include 35–37 (GGH), Asp-55, Phe-79, Asp-101, and Gln-108.

Belongs to the methyltransferase superfamily. RsmH family.

Its subcellular location is the cytoplasm. It catalyses the reaction cytidine(1402) in 16S rRNA + S-adenosyl-L-methionine = N(4)-methylcytidine(1402) in 16S rRNA + S-adenosyl-L-homocysteine + H(+). Functionally, specifically methylates the N4 position of cytidine in position 1402 (C1402) of 16S rRNA. The sequence is that of Ribosomal RNA small subunit methyltransferase H from Shigella dysenteriae serotype 1 (strain Sd197).